The sequence spans 1259 residues: Lysine-specific demethylase 2B (1259 aa).

A JmjC domain is found at 147–315; it reads FSHTKLERVV…MQLRVFEIED (169 aa). T208 serves as a coordination point for substrate. Positions 211 and 213 each coordinate Fe cation. K228 provides a ligand contact to substrate. A Fe cation-binding site is contributed by H283. Basic and acidic residues predominate over residues 388 to 402; sequence EEKGNLVEKPSKQSG. 2 disordered regions span residues 388-463 and 536-562; these read EEKG…ATDM and KPSK…SANR. Positions 403–413 are enriched in polar residues; that stretch reads DESSTTNSTHS. Basic and acidic residues predominate over residues 414 to 423; that stretch reads NGKDAAEKKQ. The segment covering 426 to 437 has biased composition (polar residues); the sequence is TLMQQLKRTLSN. Basic residues predominate over residues 536–548; the sequence is KPSKNRAVGRPKG. The CXXC-type zinc-finger motif lies at 567-613; sequence ARRRRTRCRKCEACLRTECGECHFCKDMKKFGGPGRMKQSCIMRQCI. Residues C574, C577, C580, C585, C588, C591, C607, C612, C623, C626, C649, C652, H657, C660, C680, and C683 each contribute to the Zn(2+) site. Residues 620 to 686 form a PHD-type zinc finger; it reads TAVCLVCGEA…CWECPKCNHA (67 aa). Composition is skewed to basic and acidic residues over residues 729-763 and 771-790; these read KKKV…EDGH and EKPP…EEKL. The disordered stretch occupies residues 729–958; sequence KKKVEREETP…PPPSLSPPKC (230 aa). Over residues 835-848 the composition is skewed to polar residues; that stretch reads SRSSSPTAGPSTEG. The span at 854–863 shows a compositional bias: basic residues; the sequence is KKKIRRKRRV. Basic and acidic residues predominate over residues 864–877; sequence SNKELSKELSKELN. Residues 864–891 adopt a coiled-coil conformation; it reads SNKELSKELSKELNQEIQKTESSLASEN. The segment covering 878-889 has biased composition (polar residues); sequence QEIQKTESSLAS. The span at 890 to 908 shows a compositional bias: basic and acidic residues; it reads ENHHPIKSEPESDNEESKK. The F-box domain occupies 985-1030; that stretch reads AHVMQREVWMAIFSYLSHRDLCICMRICRTWNRWCCDKRLWTQIDL. LRR repeat units lie at residues 1056–1081, 1082–1105, 1145–1170, 1171–1200, and 1201–1225; these read WTNI…NLSG, CSWI…NVQW, GLDI…DLSY, CNHV…NLSD, and CNNV…DLRF.

This sequence belongs to the JHDM1 histone demethylase family. It depends on Fe(2+) as a cofactor.

It is found in the nucleus. The protein localises to the nucleolus. It localises to the chromosome. The enzyme catalyses N(6),N(6)-dimethyl-L-lysyl(36)-[histone H3] + 2 2-oxoglutarate + 2 O2 = L-lysyl(36)-[histone H3] + 2 formaldehyde + 2 succinate + 2 CO2. Histone demethylase activity is inhibited by fumarate. Functionally, histone demethylase that demethylates 'Lys-4' and 'Lys-36' of histone H3, thereby playing a central role in histone code. Preferentially demethylates trimethylated H3 'Lys-4' and dimethylated H3 'Lys-36' residue while it has weak or no activity for mono- and tri-methylated H3 'Lys-36'. Preferentially binds the transcribed region of ribosomal RNA and represses the transcription of ribosomal RNA genes which inhibits cell growth and proliferation. This is Lysine-specific demethylase 2B (kdm2b) from Xenopus laevis (African clawed frog).